A 406-amino-acid polypeptide reads, in one-letter code: Isocitrate dehydrogenase [NADP] (406 aa).

Positions 72, 75, 77, and 82 each coordinate NADP(+). The D-threo-isocitrate site is built by Ser-94, Asn-96, Arg-100, Glu-110, and Arg-132. Mn(2+) is bound by residues Asp-250, Asp-273, and Asp-277. 5 residues coordinate NADP(+): Gly-308, Thr-309, Val-310, His-313, and Asn-326.

This sequence belongs to the isocitrate and isopropylmalate dehydrogenases family. As to quaternary structure, homodimer. The cofactor is Mg(2+). It depends on Mn(2+) as a cofactor.

The catalysed reaction is D-threo-isocitrate + NADP(+) = 2-oxoglutarate + CO2 + NADPH. In terms of biological role, catalyzes the oxidative decarboxylation of isocitrate to 2-oxoglutarate and carbon dioxide with the concomitant reduction of NADP(+). This chain is Isocitrate dehydrogenase [NADP] (icd), found in Sphingobium yanoikuyae (Sphingomonas yanoikuyae).